A 168-amino-acid polypeptide reads, in one-letter code: Transcription antitermination protein NusB (168 aa).

This sequence belongs to the NusB family.

Functionally, involved in transcription antitermination. Required for transcription of ribosomal RNA (rRNA) genes. Binds specifically to the boxA antiterminator sequence of the ribosomal RNA (rrn) operons. This Chlamydia trachomatis serovar L2 (strain ATCC VR-902B / DSM 19102 / 434/Bu) protein is Transcription antitermination protein NusB.